A 278-amino-acid chain; its full sequence is Envelope glycoprotein L (278 aa).

Residues 1–32 (MCRRPDCGFSFSPGPVILLWCCLLLSIVSSAA) form the signal peptide. A gL betaherpesvirus-type domain is found at 43–256 (VPAECPELTR…DKYYAGLPPE (214 aa)). Cysteine 154 and cysteine 159 are oxidised to a cystine.

This sequence belongs to the herpesviridae glycoprotein L (gL) family. Betaherpesvirinae gL subfamily. As to quaternary structure, interacts with glycoprotein H (gH); this interaction is necessary for the correct processing and cell surface expression of gH. Forms the envelope pentamer complex (PC) composed of gH, gL, UL128, UL130, and UL131A. The pentamer interacts with host NRP2. Forms the envelope trimer complex composed of gH, gL, and gO. The trimer interacts with host PDGFRA. The trimer also interacts with host EPHA2.

It is found in the virion membrane. Its subcellular location is the host cell membrane. It localises to the host Golgi apparatus. The protein localises to the host trans-Golgi network. The heterodimer glycoprotein H-glycoprotein L is required for the fusion of viral and plasma membranes leading to virus entry into the host cell. Acts as a functional inhibitor of gH and maintains gH in an inhibited form. Upon binding to host integrins, gL dissociates from gH leading to activation of the viral fusion glycoproteins gB and gH. In human cytomegalovirus, forms two distincts complexes to mediate viral entry, a trimer and a pentamer at the surface of the virion envelope. The gH-gL-gO trimer is required for infection in fibroblasts by interacting with host PDGFRA, and in glioblastoma cells by interacting with host EPHA2. The gH-gL-UL128-UL130-UL131A pentamer is essential for viral entry in epithelial, endothelial and myeloid cells via interaction with host NRP2. This chain is Envelope glycoprotein L, found in Human cytomegalovirus (strain 119) (HHV-5).